The primary structure comprises 413 residues: Peptidase T (413 aa).

Zn(2+) is bound at residue His84. The active site involves Asp86. Asp147 provides a ligand contact to Zn(2+). The active-site Proton acceptor is the Glu181. 3 residues coordinate Zn(2+): Glu182, Asp204, and His386.

It belongs to the peptidase M20B family. The cofactor is Zn(2+).

The protein localises to the cytoplasm. It catalyses the reaction Release of the N-terminal residue from a tripeptide.. Functionally, cleaves the N-terminal amino acid of tripeptides. The protein is Peptidase T of Ligilactobacillus salivarius (strain UCC118) (Lactobacillus salivarius).